A 134-amino-acid polypeptide reads, in one-letter code: Fluoride-specific ion channel FluC (134 aa).

The next 4 membrane-spanning stretches (helical) occupy residues 7–27, 38–58, 69–89, and 110–130; these read LAVA…TIMA, GTLL…IVLV, LFLF…AAES, and VGSL…LLGH. The Na(+) site is built by glycine 77 and threonine 80.

It belongs to the fluoride channel Fluc/FEX (TC 1.A.43) family.

The protein resides in the cell inner membrane. The enzyme catalyses fluoride(in) = fluoride(out). Na(+) is not transported, but it plays an essential structural role and its presence is essential for fluoride channel function. In terms of biological role, fluoride-specific ion channel. Important for reducing fluoride concentration in the cell, thus reducing its toxicity. In Legionella pneumophila subsp. pneumophila (strain Philadelphia 1 / ATCC 33152 / DSM 7513), this protein is Fluoride-specific ion channel FluC.